The following is a 146-amino-acid chain: Ribonuclease H (146 aa).

The RNase H type-1 domain occupies 1–143 (MRKKIIIYTD…CDYLARQAIK (143 aa)). 4 residues coordinate Mg(2+): D10, E48, D70, and D135.

It belongs to the RNase H family. As to quaternary structure, monomer. The cofactor is Mg(2+).

Its subcellular location is the cytoplasm. The catalysed reaction is Endonucleolytic cleavage to 5'-phosphomonoester.. Its function is as follows. Endonuclease that specifically degrades the RNA of RNA-DNA hybrids. The chain is Ribonuclease H from Prosthecochloris aestuarii (strain DSM 271 / SK 413).